Here is a 327-residue protein sequence, read N- to C-terminus: Replication factor C small subunit (327 aa).

47–54 (GPPGTGKT) serves as a coordination point for ATP.

Belongs to the activator 1 small subunits family. RfcS subfamily. Heteromultimer composed of small subunits (RfcS) and large subunits (RfcL).

In terms of biological role, part of the RFC clamp loader complex which loads the PCNA sliding clamp onto DNA. The sequence is that of Replication factor C small subunit from Sulfurisphaera tokodaii (strain DSM 16993 / JCM 10545 / NBRC 100140 / 7) (Sulfolobus tokodaii).